Consider the following 343-residue polypeptide: GTP 3',8-cyclase (343 aa).

Residues 19-244 (PYGRTISYLR…TDVDDSTGGP (226 aa)) enclose the Radical SAM core domain. Residue Arg-28 participates in GTP binding. [4Fe-4S] cluster contacts are provided by Cys-35 and Cys-39. Tyr-41 is a binding site for S-adenosyl-L-methionine. Cys-42 serves as a coordination point for [4Fe-4S] cluster. Arg-77 lines the GTP pocket. Gly-81 is an S-adenosyl-L-methionine binding site. Thr-111 contributes to the GTP binding site. Ser-135 is a binding site for S-adenosyl-L-methionine. Lys-171 contacts GTP. An S-adenosyl-L-methionine-binding site is contributed by Met-205. Cys-268 and Cys-271 together coordinate [4Fe-4S] cluster. 273–275 (RVR) is a GTP binding site. Cys-285 contacts [4Fe-4S] cluster.

It belongs to the radical SAM superfamily. MoaA family. As to quaternary structure, monomer and homodimer. Requires [4Fe-4S] cluster as cofactor.

The catalysed reaction is GTP + AH2 + S-adenosyl-L-methionine = (8S)-3',8-cyclo-7,8-dihydroguanosine 5'-triphosphate + 5'-deoxyadenosine + L-methionine + A + H(+). The protein operates within cofactor biosynthesis; molybdopterin biosynthesis. Its function is as follows. Catalyzes the cyclization of GTP to (8S)-3',8-cyclo-7,8-dihydroguanosine 5'-triphosphate. The protein is GTP 3',8-cyclase of Nitrobacter hamburgensis (strain DSM 10229 / NCIMB 13809 / X14).